The primary structure comprises 127 residues: Fluoride-specific ion channel FluC (127 aa).

A run of 4 helical transmembrane segments spans residues 1–21 (MMSYLIVFFGAGIGGMARHMV), 32–52 (EFPFGTLFINMLGSFLIGAVV), 71–91 (TGILGGFTTFSAFSLETVLLY), and 96–116 (VFLAASYAVASVTLSVGALLL). Positions 75 and 78 each coordinate Na(+).

It belongs to the fluoride channel Fluc/FEX (TC 1.A.43) family.

It localises to the cell inner membrane. It catalyses the reaction fluoride(in) = fluoride(out). Na(+) is not transported, but it plays an essential structural role and its presence is essential for fluoride channel function. Fluoride-specific ion channel. Important for reducing fluoride concentration in the cell, thus reducing its toxicity. The sequence is that of Fluoride-specific ion channel FluC from Granulibacter bethesdensis (strain ATCC BAA-1260 / CGDNIH1).